A 320-amino-acid polypeptide reads, in one-letter code: Cytochrome f (320 aa).

The signal sequence occupies residues 1 to 35 (MQTRNTFSWIREEITRSISVSLMIYIITWASISSA). Heme contacts are provided by tyrosine 36, cysteine 56, cysteine 59, and histidine 60. Residues 286–306 (VQGLLFFLGSVVLAQIFLVLK) traverse the membrane as a helical segment.

The protein belongs to the cytochrome f family. In terms of assembly, the 4 large subunits of the cytochrome b6-f complex are cytochrome b6, subunit IV (17 kDa polypeptide, petD), cytochrome f and the Rieske protein, while the 4 small subunits are PetG, PetL, PetM and PetN. The complex functions as a dimer. It depends on heme as a cofactor.

It is found in the plastid. The protein localises to the chloroplast thylakoid membrane. Its function is as follows. Component of the cytochrome b6-f complex, which mediates electron transfer between photosystem II (PSII) and photosystem I (PSI), cyclic electron flow around PSI, and state transitions. The polypeptide is Cytochrome f (Nasturtium officinale (Watercress)).